Here is a 353-residue protein sequence, read N- to C-terminus: Phosphate acyltransferase (353 aa).

Belongs to the PlsX family. As to quaternary structure, homodimer. Probably interacts with PlsY.

The protein resides in the cytoplasm. It carries out the reaction a fatty acyl-[ACP] + phosphate = an acyl phosphate + holo-[ACP]. It functions in the pathway lipid metabolism; phospholipid metabolism. Its function is as follows. Catalyzes the reversible formation of acyl-phosphate (acyl-PO(4)) from acyl-[acyl-carrier-protein] (acyl-ACP). This enzyme utilizes acyl-ACP as fatty acyl donor, but not acyl-CoA. In Myxococcus xanthus (strain DK1622), this protein is Phosphate acyltransferase.